We begin with the raw amino-acid sequence, 450 residues long: MLAVAVLAAGKGTRMKSALPKVLQPLAGATLVERVLASAKNLQPERRLLIVGHQAERVEQTLEHVNGLEFVLQSPQNGTGHAVQQLLPVMEGFEGELLVLNGDVPLLRAATIDALVQGHRSSGADVTLLTARLADPTGYGRVFADTDGQVSNIIEHRDCSEEQRGNNLTNAGIYCFNWAALAEVLPQLSNDNDQGELYLTDTVAMLPRAMHLEVDDPDEVNGINNRKQLAQCEGVLQQRLRDYWMDEGVTFVDPASCTLSEDCRFGRDVVVEPQTHFRGCCSIGDNSKLGPGTLIDNASLGDRVEVVQSVVREAKVGDDVSIGPFAHLRPAADVGHGCRIGNFVEVKKSSLGAGSKVNHLSYIGDASLGENVNVGAGTITANYDGVNKHQTVIGDHSKTGANSVLVAPVTIGDHVTIGAGSTITKDVPSKALSIGRARQMTKDNWANRSI.

Positions 1 to 226 are pyrophosphorylase; that stretch reads MLAVAVLAAG…PDEVNGINNR (226 aa). UDP-N-acetyl-alpha-D-glucosamine is bound by residues 7–10, K21, Q73, and 78–79; these read LAAG and GT. D103 serves as a coordination point for Mg(2+). Residues G140, E155, N170, and N224 each contribute to the UDP-N-acetyl-alpha-D-glucosamine site. Residue N224 coordinates Mg(2+). Residues 227 to 247 are linker; that stretch reads KQLAQCEGVLQQRLRDYWMDE. Residues 248-450 are N-acetyltransferase; that stretch reads GVTFVDPASC…TKDNWANRSI (203 aa). 2 residues coordinate UDP-N-acetyl-alpha-D-glucosamine: R329 and K347. The active-site Proton acceptor is the H359. Y362 and N373 together coordinate UDP-N-acetyl-alpha-D-glucosamine. Acetyl-CoA contacts are provided by residues A376, 382–383, A419, and R436; that span reads NY.

It in the N-terminal section; belongs to the N-acetylglucosamine-1-phosphate uridyltransferase family. The protein in the C-terminal section; belongs to the transferase hexapeptide repeat family. As to quaternary structure, homotrimer. Mg(2+) serves as cofactor.

Its subcellular location is the cytoplasm. The enzyme catalyses alpha-D-glucosamine 1-phosphate + acetyl-CoA = N-acetyl-alpha-D-glucosamine 1-phosphate + CoA + H(+). It catalyses the reaction N-acetyl-alpha-D-glucosamine 1-phosphate + UTP + H(+) = UDP-N-acetyl-alpha-D-glucosamine + diphosphate. It functions in the pathway nucleotide-sugar biosynthesis; UDP-N-acetyl-alpha-D-glucosamine biosynthesis; N-acetyl-alpha-D-glucosamine 1-phosphate from alpha-D-glucosamine 6-phosphate (route II): step 2/2. Its pathway is nucleotide-sugar biosynthesis; UDP-N-acetyl-alpha-D-glucosamine biosynthesis; UDP-N-acetyl-alpha-D-glucosamine from N-acetyl-alpha-D-glucosamine 1-phosphate: step 1/1. The protein operates within bacterial outer membrane biogenesis; LPS lipid A biosynthesis. Functionally, catalyzes the last two sequential reactions in the de novo biosynthetic pathway for UDP-N-acetylglucosamine (UDP-GlcNAc). The C-terminal domain catalyzes the transfer of acetyl group from acetyl coenzyme A to glucosamine-1-phosphate (GlcN-1-P) to produce N-acetylglucosamine-1-phosphate (GlcNAc-1-P), which is converted into UDP-GlcNAc by the transfer of uridine 5-monophosphate (from uridine 5-triphosphate), a reaction catalyzed by the N-terminal domain. The polypeptide is Bifunctional protein GlmU (Synechococcus sp. (strain CC9902)).